A 705-amino-acid polypeptide reads, in one-letter code: Elongation factor G 2 (705 aa).

Residues 8 to 288 form the tr-type G domain; the sequence is ERYRNIGISA…AVIDYLPSPA (281 aa). GTP-binding positions include 17 to 24, 86 to 90, and 140 to 143; these read AHIDAGKT, DTPGH, and NKMD.

This sequence belongs to the TRAFAC class translation factor GTPase superfamily. Classic translation factor GTPase family. EF-G/EF-2 subfamily.

It localises to the cytoplasm. Catalyzes the GTP-dependent ribosomal translocation step during translation elongation. During this step, the ribosome changes from the pre-translocational (PRE) to the post-translocational (POST) state as the newly formed A-site-bound peptidyl-tRNA and P-site-bound deacylated tRNA move to the P and E sites, respectively. Catalyzes the coordinated movement of the two tRNA molecules, the mRNA and conformational changes in the ribosome. In Bordetella parapertussis (strain 12822 / ATCC BAA-587 / NCTC 13253), this protein is Elongation factor G 2.